Here is a 538-residue protein sequence, read N- to C-terminus: MEKLLKKLPFYDHTWFNFLRFLIGNFIKDDGQQKAASLTYTTLLSIVPILTVLLMILSSVPALESVREQISNIIYSNLLPQSGLQVSEYINNFAEKSSNLTAIGALALFVTTIMTLTTIERAFNQIWRVEDRSGGIKSIVRYWTIITLGPLVLGTAFLVSSAVQSLSFLNQQVAGYGIDWGFWVQVVSFAVTIAGFIGMYWFIPKAKVPLKNAAIAGVFVAVTFELLKYSFGIIMSNFTSYEAIYGAFAALPIFLLWIYLSWNLILLGVEISYTLTIFATSEVYPRHPLLSLLDMLNLVHDRYQQGKDTSEEDLRSVLGRKELPKWFTYLNYLKDAHLITETDEGNYVLKKDLDNITLWEFYRTLPYPLPIKDELDEVCANARTPWLSLLVQRFVQTEKHARQELDIPLAKIFAHSLPREKVEVSHSVFSAQDADAKRTTSQSTTAEGGRQSAAEDGKFDAQPFDPNADVLPDSDSKEATNPPDADIKAAAAKGTVNSAQHSKHTETAKQEHKKTGLLGLFSHDKDAPIITEDDNPNK.

6 helical membrane passes run 43 to 63 (LLSI…VPAL), 100 to 120 (LTAI…TTIE), 143 to 163 (WTII…SSAV), 183 to 203 (WVQV…YWFI), 215 to 235 (IAGV…GIIM), and 247 to 267 (AFAA…LILL). The disordered stretch occupies residues 427–538 (SVFSAQDADA…IITEDDNPNK (112 aa)). A compositionally biased stretch (low complexity) spans 482 to 493 (PPDADIKAAAAK). Positions 503–514 (KHTETAKQEHKK) are enriched in basic and acidic residues.

It belongs to the UPF0761 family.

The protein localises to the cell inner membrane. The protein is UPF0761 membrane protein PsycPRwf_0630 of Psychrobacter sp. (strain PRwf-1).